A 762-amino-acid chain; its full sequence is MAIQTSNLGYPRIGLQREWKKTLEAFWSNKINEEQFLTTMKEIRLQHVKVQQEKGIELIPIGDFTYYDHVLDTAYMLGFIPSRFSEFTSYLDVYFAMARGSKDHVASEMTKWFNTNYHYIVPEYEEGLQISLKDNRPLRLYEEAKQELGVDGKPVILGPYTFLKLAKGYTQEQFATILKQLVAPYVQLLSELHAAGAQIIQVDEPIFASLTKEEVQQAKEIYEAIRKEVPNATLLLQTYFDSVEENYENIITFPVSSIGLDFVHGKEGNLNAISKYGFPADKTLAVGCIDGRNIWRADLDEVLTLFTKLQTQVQTKDFIVQPSCSLLHTPIDKTEETHLSTELFDALAFANQKLEELVLIHSALTQGTESISNELETYRNVHHTIRSSAARNREDVKAARTALKEEDFSRPLPFEKRYKLQQVALKLPLLPTTTIGSFPQTTEVRQTRKEWRTGVISNKQYEQFIEKETEKWIRYQEEIGLDVLVHGEFERTDMVEYFGERLAGFSFTKNGWVQSYGSRCVKPPVIYGDVAFINGMTIKETVYAQSLTEKVVKGMLTGPVTILNWSFVRNDIPRKEVSYQIALALRHEIELLESSGIRVIQVDEPALREGMPLKEKDWDAYITWAVQSFLLATSSVANVTQIHTHMCYSNFEDIVDAIRALDADVISIETSRSHGEFIDTLKHTTYEKGIGLGVYDIHSPRVPSKDEMYKIVEQSLEVCDPKYFWINPDCGLKTRRTEEVIPALEHMVQAAKDARSLLKTNA.

5-methyltetrahydropteroyltri-L-glutamate-binding positions include 17 to 20 (REWK) and lysine 111. L-homocysteine-binding positions include 435–437 (IGS) and glutamate 488. Residues 435–437 (IGS) and glutamate 488 contribute to the L-methionine site. 5-methyltetrahydropteroyltri-L-glutamate contacts are provided by residues 519-520 (RC) and tryptophan 565. Aspartate 603 lines the L-homocysteine pocket. Aspartate 603 serves as a coordination point for L-methionine. Position 609 (glutamate 609) interacts with 5-methyltetrahydropteroyltri-L-glutamate. Residues histidine 645, cysteine 647, and glutamate 669 each coordinate Zn(2+). Histidine 698 (proton donor) is an active-site residue. Cysteine 730 serves as a coordination point for Zn(2+).

Belongs to the vitamin-B12 independent methionine synthase family. It depends on Zn(2+) as a cofactor.

The enzyme catalyses 5-methyltetrahydropteroyltri-L-glutamate + L-homocysteine = tetrahydropteroyltri-L-glutamate + L-methionine. Its pathway is amino-acid biosynthesis; L-methionine biosynthesis via de novo pathway; L-methionine from L-homocysteine (MetE route): step 1/1. Catalyzes the transfer of a methyl group from 5-methyltetrahydrofolate to homocysteine resulting in methionine formation. The chain is 5-methyltetrahydropteroyltriglutamate--homocysteine methyltransferase from Bacillus cereus (strain ZK / E33L).